A 433-amino-acid chain; its full sequence is GTPase Der (433 aa).

2 consecutive EngA-type G domains span residues 5-167 and 174-349; these read KKVL…GRVN and IKVG…DQLE. GTP is bound by residues 11–18, 58–62, 119–122, 180–187, 227–231, and 292–295; these read GRPNVGKS, DTGGF, NKVD, GKPNSGKS, DTAGI, and SKWD. In terms of domain architecture, KH-like spans 349 to 429; the sequence is ELKTNTPDLN…PILVELREKI (81 aa).

It belongs to the TRAFAC class TrmE-Era-EngA-EngB-Septin-like GTPase superfamily. EngA (Der) GTPase family. As to quaternary structure, associates with the 50S ribosomal subunit.

Functionally, GTPase that plays an essential role in the late steps of ribosome biogenesis. The polypeptide is GTPase Der (Borrelia garinii subsp. bavariensis (strain ATCC BAA-2496 / DSM 23469 / PBi) (Borreliella bavariensis)).